A 520-amino-acid chain; its full sequence is Ribonuclease Y (520 aa).

The chain crosses the membrane as a helical span at residues 3 to 23 (FILVLCTVSSLFVGGGTGIFL). In terms of domain architecture, KH spans 209-272 (TVTAVTLPSE…QVAKMALERL (64 aa)). Positions 335 to 429 (VLRHSIEVAS…VQASDCLSGA (95 aa)) constitute an HD domain.

This sequence belongs to the RNase Y family.

It localises to the cell membrane. Functionally, endoribonuclease that initiates mRNA decay. This chain is Ribonuclease Y, found in Lawsonia intracellularis (strain PHE/MN1-00).